Reading from the N-terminus, the 197-residue chain is Probable nicotinate-nucleotide adenylyltransferase (197 aa).

It belongs to the NadD family.

It carries out the reaction nicotinate beta-D-ribonucleotide + ATP + H(+) = deamido-NAD(+) + diphosphate. Its pathway is cofactor biosynthesis; NAD(+) biosynthesis; deamido-NAD(+) from nicotinate D-ribonucleotide: step 1/1. In terms of biological role, catalyzes the reversible adenylation of nicotinate mononucleotide (NaMN) to nicotinic acid adenine dinucleotide (NaAD). This Neisseria meningitidis serogroup C (strain 053442) protein is Probable nicotinate-nucleotide adenylyltransferase.